A 151-amino-acid polypeptide reads, in one-letter code: Putative olfactory receptor 13C6 (151 aa).

Residues 1–27 (MVSANQTASVTEFILLGLSAHPKLEKT) lie on the Extracellular side of the membrane. An N-linked (GlcNAc...) asparagine glycan is attached at asparagine 5. Residues 28–48 (FFVLILLMYLVILLGNGVLIL) form a helical membrane-spanning segment. Topologically, residues 49 to 61 (MTVSNSHLHMPMY) are cytoplasmic. The helical transmembrane segment at 62-82 (FFLGNLSFLDICYTTSSVPLI) threads the bilayer. The Extracellular segment spans residues 83–100 (LDSFLTPRKTISFSACAV). A helical transmembrane segment spans residues 101 to 121 (QMFLSFAMGATECVLLSMMAF).

The protein belongs to the G-protein coupled receptor 1 family.

Its subcellular location is the cell membrane. Odorant receptor. The protein is Putative olfactory receptor 13C6 of Homo sapiens (Human).